The chain runs to 335 residues: Biotin synthase (335 aa).

The 227-residue stretch at 43–269 (YFGKKVKLNM…INPTKEIRIA (227 aa)) folds into the Radical SAM core domain. Residues Cys61, Cys65, and Cys68 each coordinate [4Fe-4S] cluster. 4 residues coordinate [2Fe-2S] cluster: Cys104, Cys137, Cys197, and Arg267.

Belongs to the radical SAM superfamily. Biotin synthase family. As to quaternary structure, homodimer. [4Fe-4S] cluster serves as cofactor. It depends on [2Fe-2S] cluster as a cofactor.

It carries out the reaction (4R,5S)-dethiobiotin + (sulfur carrier)-SH + 2 reduced [2Fe-2S]-[ferredoxin] + 2 S-adenosyl-L-methionine = (sulfur carrier)-H + biotin + 2 5'-deoxyadenosine + 2 L-methionine + 2 oxidized [2Fe-2S]-[ferredoxin]. Its pathway is cofactor biosynthesis; biotin biosynthesis; biotin from 7,8-diaminononanoate: step 2/2. Catalyzes the conversion of dethiobiotin (DTB) to biotin by the insertion of a sulfur atom into dethiobiotin via a radical-based mechanism. This chain is Biotin synthase, found in Staphylococcus aureus (strain MSSA476).